Consider the following 122-residue polypeptide: ATP synthase epsilon chain (122 aa).

This sequence belongs to the ATPase epsilon chain family. As to quaternary structure, F-type ATPases have 2 components, CF(1) - the catalytic core - and CF(0) - the membrane proton channel. CF(1) has five subunits: alpha(3), beta(3), gamma(1), delta(1), epsilon(1). CF(0) has three main subunits: a, b and c.

It is found in the cell membrane. Functionally, produces ATP from ADP in the presence of a proton gradient across the membrane. The chain is ATP synthase epsilon chain from Rhodococcus jostii (strain RHA1).